The primary structure comprises 772 residues: General transcription and DNA repair factor IIH helicase subunit XPD (772 aa).

One can recognise a Helicase ATP-binding domain in the interval aspartate 7 to glutamate 283. Methionine 42 to threonine 49 is an ATP binding site. Positions 115, 133, 154, and 189 each coordinate [4Fe-4S] cluster. Residues aspartate 233 to histidine 236 carry the DEAH box motif.

This sequence belongs to the helicase family. RAD3/XPD subfamily. Component of the 7-subunit TFIIH core complex composed of XPB/ptr8, XPD/rad15, ssl1, tfb1, tfb2, tfb4 and tfb5, which is active in NER. The core complex associates with the 3-subunit CTD-kinase module TFIIK composed of mcs2/cyclin H, mcs6/cdk7 and pmh1/tfb3 to form the 10-subunit holoenzyme (holo-TFIIH) active in transcription. It depends on [4Fe-4S] cluster as a cofactor.

It is found in the nucleus. The enzyme catalyses Couples ATP hydrolysis with the unwinding of duplex DNA at the replication fork by translocating in the 5'-3' direction. This creates two antiparallel DNA single strands (ssDNA). The leading ssDNA polymer is the template for DNA polymerase III holoenzyme which synthesizes a continuous strand.. It catalyses the reaction ATP + H2O = ADP + phosphate + H(+). ATP-dependent 5'-3' DNA helicase, component of the general transcription and DNA repair factor IIH (TFIIH) core complex, which is involved in general and transcription-coupled nucleotide excision repair (NER) of damaged DNA and, when complexed to TFIIK, in RNA transcription by RNA polymerase II. In NER, TFIIH acts by opening DNA around the lesion to allow the excision of the damaged oligonucleotide and its replacement by a new DNA fragment. The ATP-dependent helicase activity of XPD/rad15 is required for DNA opening. In transcription, TFIIH has an essential role in transcription initiation. When the pre-initiation complex (PIC) has been established, TFIIH is required for promoter opening and promoter escape. Phosphorylation of the C-terminal tail (CTD) of the largest subunit of RNA polymerase II by the kinase module TFIIK controls the initiation of transcription. XPD/rad15 acts by forming a bridge between TFIIK and the core-TFIIH complex. Involved in the maintenance of the fidelity of DNA replication. The sequence is that of General transcription and DNA repair factor IIH helicase subunit XPD from Schizosaccharomyces pombe (strain 972 / ATCC 24843) (Fission yeast).